The chain runs to 182 residues: Pentatricopeptide repeat-containing protein At2g01360 (182 aa).

3 PPR repeats span residues glutamate 30–leucine 64, glycine 65–aspartate 95, and glycine 98–proline 132.

The protein belongs to the PPR family. P subfamily.

This Arabidopsis thaliana (Mouse-ear cress) protein is Pentatricopeptide repeat-containing protein At2g01360.